The chain runs to 998 residues: Protein Smaug (998 aa).

Residues 1–37 (MKYATGTDNAMTSGISGQTNNSNSASNEMQPTTSTPT) show a composition bias toward polar residues. 3 disordered regions span residues 1 to 45 (MKYA…EATS), 50 to 69 (TATY…QSQP), and 329 to 370 (LCPA…GSSS). The segment covering 329–338 (LCPASGSRSS) has biased composition (low complexity). Phosphoserine occurs at positions 564 and 575. The tract at residues 583-763 (EFKPNYIKFH…KDLKFKLSKM (181 aa)) is interaction with cup. Residues 600 to 654 (GIGLWLKSLRLHKYIELFKNMTYEEMLLITEDFLQSVGVTKGASHKLALCIDKLK) enclose the SAM domain. Disordered stretches follow at residues 773-892 (HVKP…MQQM) and 942-977 (NNGS…QQPK). Polar residues-rich tracts occupy residues 801–822 (KSGS…NFSL) and 854–864 (HQPQYKSSSYP). Ser971 carries the post-translational modification Phosphoserine.

It belongs to the SMAUG family. Interacts with oskar (osk). Binds to the 3'-UTR of nos. Interacts with cup, which in turn recruits eIF4-E, leading to an indirect interaction between smg and eIF4-E that prevents mRNA translation.

It is found in the cytoplasm. Its function is as follows. Translation regulator that binds to the 3'-UTR of specific mRNAs such as nanos (nos) and prevent their translation. Prevents translation of unlocalized nos in the bulk cytoplasm via the recruitment of cup. The chain is Protein Smaug from Drosophila simulans (Fruit fly).